A 321-amino-acid polypeptide reads, in one-letter code: NADH-quinone oxidoreductase subunit H (321 aa).

The next 8 membrane-spanning stretches (helical) occupy residues 9–29, 78–98, 111–131, 156–176, 183–203, 234–254, 262–282, and 296–316; these read LLAI…GAYM, IIFT…FAIM, IGIL…LLGG, FLGL…ISTI, IWNI…GLAI, FFIG…TLFF, LPPY…FILI, and ILGW…TAIV.

It belongs to the complex I subunit 1 family. As to quaternary structure, NDH-1 is composed of 14 different subunits. Subunits NuoA, H, J, K, L, M, N constitute the membrane sector of the complex.

It is found in the cell membrane. It carries out the reaction a quinone + NADH + 5 H(+)(in) = a quinol + NAD(+) + 4 H(+)(out). Functionally, NDH-1 shuttles electrons from NADH, via FMN and iron-sulfur (Fe-S) centers, to quinones in the respiratory chain. The immediate electron acceptor for the enzyme in this species is believed to be ubiquinone. Couples the redox reaction to proton translocation (for every two electrons transferred, four hydrogen ions are translocated across the cytoplasmic membrane), and thus conserves the redox energy in a proton gradient. This subunit may bind ubiquinone. The sequence is that of NADH-quinone oxidoreductase subunit H from Baumannia cicadellinicola subsp. Homalodisca coagulata.